A 437-amino-acid chain; its full sequence is Beta-1,3-galactosyl-O-glycosyl-glycoprotein beta-1,6-N-acetylglucosaminyltransferase 3 (437 aa).

Residues methionine 1 to arginine 6 are Cytoplasmic-facing. Residues phenylalanine 7 to leucine 27 form a helical; Signal-anchor for type II membrane protein membrane-spanning segment. At lysine 28–leucine 437 the chain is on the lumenal side. Cystine bridges form between cysteine 70-cysteine 227, cysteine 161-cysteine 381, cysteine 182-cysteine 209, and cysteine 390-cysteine 422. The N-linked (GlcNAc...) asparagine glycan is linked to asparagine 288.

Belongs to the glycosyltransferase 14 family. In terms of processing, N-glycosylated.

It is found in the golgi apparatus membrane. It carries out the reaction a 3-O-[beta-D-galactosyl-(1-&gt;3)-N-acetyl-alpha-D-galactosaminyl]-L-seryl-[protein] + UDP-N-acetyl-alpha-D-glucosamine = 3-O-{beta-D-galactosyl-(1-&gt;3)-[N-acetyl-beta-D-glucosaminyl-(1-&gt;6)]-N-acetyl-alpha-D-galactosaminyl}-L-seryl-[protein] + UDP + H(+). The enzyme catalyses a 3-O-[beta-D-galactosyl-(1-&gt;3)-N-acetyl-alpha-D-galactosaminyl]-L-threonyl-[protein] + UDP-N-acetyl-alpha-D-glucosamine = a 3-O-{beta-D-galactosyl-(1-&gt;3)-[N-acetyl-beta-D-glucosaminyl-(1-&gt;6)]-N-acetyl-alpha-D-galactosaminyl}-L-threonyl-[protein] + UDP + H(+). The catalysed reaction is a beta-D-Gal-(1-&gt;4)-beta-D-GlcNAc-(1-&gt;3)-beta-D-Gal-(1-&gt;4)-beta-D-GlcNAc derivative + UDP-N-acetyl-alpha-D-glucosamine = a beta-D-Gal-(1-&gt;4)-beta-D-GlcNAc-(1-&gt;3)-[beta-D-GlcNAc-(1-&gt;6)]-beta-D-Gal-(1-&gt;4)-N-acetyl-beta-D-glucosaminyl derivative + UDP + H(+). It catalyses the reaction 3-O-[N-acetyl-beta-D-glucosaminyl-(1-&gt;3)-N-acetyl-alpha-D-galactosaminyl]-L-seryl-[protein] + UDP-N-acetyl-alpha-D-glucosamine = 3-O-[N-acetyl-beta-D-glucosaminyl-(1-&gt;3)-[N-acetyl-beta-D-glucosaminyl-(1-&gt;6)]-N-acetyl-alpha-D-galactosaminyl]-L-seryl-[protein] + UDP + H(+). It carries out the reaction a 3-O-[N-acetyl-beta-D-glucosaminyl-(1-&gt;3)-N-acetyl-alpha-D-galactosaminyl]-L-threonyl-[protein] + UDP-N-acetyl-alpha-D-glucosamine = 3-O-[N-acetyl-beta-D-glucosaminyl-(1-&gt;3)-[N-acetyl-beta-D-glucosaminyl-(1-&gt;6)]-N-acetyl-alpha-D-galactosaminyl]-L-threonyl-[protein] + UDP + H(+). Its pathway is protein modification; protein glycosylation. In terms of biological role, glycosyltransferase that can synthesize all known mucin beta 6 N-acetylglucosaminides. Mediates core 2 and core 4 O-glycan branching, 2 important steps in mucin-type biosynthesis. Also has I-branching enzyme activity by converting linear into branched poly-N-acetyllactosaminoglycans, leading to introduce the blood group I antigen during embryonic development. This is Beta-1,3-galactosyl-O-glycosyl-glycoprotein beta-1,6-N-acetylglucosaminyltransferase 3 (Gcnt3) from Rattus norvegicus (Rat).